A 422-amino-acid chain; its full sequence is Zinc finger protein Gfi-1 (422 aa).

The SNAG domain stretch occupies residues 1–20 (MPRSFLVKSKKAHSYHQPRS). Residues 1–109 (MPRSFLVKSK…ASEKSMCPSL (109 aa)) form a disordered region. A phosphoserine mark is found at serine 20 and serine 56. Residues 140 to 257 (RPCGALERGA…LLLGGGSYKC (118 aa)) are required for interaction with RELA. 6 consecutive C2H2-type zinc fingers follow at residues 255–278 (YKCI…RRSH), 284–306 (FACE…KAVH), 312–334 (FDCK…LLIH), 340–362 (YPCQ…TFIH), 368–390 (HKCQ…SRKH), and 396–419 (FGCD…ETQH).

In terms of assembly, interacts with U2AF1L4. Component of RCOR-GFI-KDM1A-HDAC complexes. Interacts directly with RCOR1, KDM1A and HDAC2. Also interacts with HDAC1. Interacts (via the zinc-finger domain) with ARIH2; the interaction prevents GFI1 ubiquitination and proteasomal degradation. Interacts with PIAS3; the interaction relieves the inhibitory effect of PIAS3 on STAT3-mediated transcriptional activity. Forms a complex with EHMT2 and HDAC1 to promote 'Lys-9' dimethylation of H3 (H3K9Me2) and repress expression of target genes. Interacts directly with EHMT2. Component of the GFI1-AJUBA-HDAC1 repressor complex. Interacts directly with AJUBA (via ITS LIM domains); the interaction results in the HDAC-dependent corepression of a subset of GFI1 target genes and, occurs independently of the SNAG domain. Interacts with SPI1; the interaction inhibits SPI1 transcriptional activity targeted at macrophage-specific genes, repressing macrophage differentiation of myeloid progenitor cells and promoting granulocyte commitment. Interacts with RUNX1T1; the interaction represses HDAC-mediated transcriptional activity. Interacts with RELA; the interaction occurs on liposaccharide (LPS) stimulation and controls RELA DNA binding activity and regulates endotoxin-mediated TOLL-like receptor inflammatory response. Interacts (via the C-terminal zinc fingers) with ZBTB17; the interaction results in the recruitment of GFI1 to the CDKN1A/p21 and CDKN1B promoters and repression of transcription. Ubiquitinated. Ubiquitination and degradation by the proteasome is inhibited by the ubiquitin ligase, ARIH2.

It is found in the nucleus. In terms of biological role, transcription repressor essential for hematopoiesis. Functions in a cell-context and development-specific manner. Binds to 5'-TAAATCAC[AT]GCA-3' in the promoter region of a large number of genes. Component of several complexes, including the EHMT2-GFI1-HDAC1, AJUBA-GFI1-HDAC1 and RCOR-GFI-KDM1A-HDAC complexes, that suppress, via histone deacetylase (HDAC) recruitment, a number of genes implicated in multilineage blood cell development. Regulates neutrophil differentiation, promotes proliferation of lymphoid cells, and is required for granulocyte development. Inhibits SPI1 transcriptional activity at macrophage-specific genes, repressing macrophage differentiation of myeloid progenitor cells and promoting granulocyte commitment. Mediates, together with U2AF1L4, the alternative splicing of CD45 and controls T-cell receptor signaling. Regulates the endotoxin-mediated Toll-like receptor (TLR) inflammatory response by antagonizing RELA. Cooperates with CBFA2T2 to regulate ITGB1-dependent neurite growth. Controls cell-cycle progression by repressing CDKNIA/p21 transcription in response to TGFB1 via recruitment of GFI1 by ZBTB17 to the CDKNIA/p21 and CDKNIB promoters. Required for the maintenance of inner ear hair cells. In addition to its role in transcription, acts as a substrate adapter for PRMT1 in the DNA damage response: facilitates the recognition of TP53BP1 and MRE11 substrates by PRMT1, promoting their methylation and the DNA damage response. The sequence is that of Zinc finger protein Gfi-1 (GFI1) from Homo sapiens (Human).